Consider the following 300-residue polypeptide: GTPase Era (300 aa).

Residues 7–175 (KSGFAVMAGL…KTAVAETLPF (169 aa)) form the Era-type G domain. A G1 region spans residues 15-22 (GLPNAGKS). 15–22 (GLPNAGKS) contacts GTP. Residues 41 to 45 (QMTRQ) are G2. The interval 62-65 (DTPG) is G3. Residues 62 to 66 (DTPGF) and 124 to 127 (NKAD) each bind GTP. Residues 124 to 127 (NKAD) form a G4 region. A G5 region spans residues 154-156 (ISA). Positions 198–283 (IREQIFNLYE…RLELEVSVEP (86 aa)) constitute a KH type-2 domain.

The protein belongs to the TRAFAC class TrmE-Era-EngA-EngB-Septin-like GTPase superfamily. Era GTPase family. As to quaternary structure, monomer.

It localises to the cytoplasm. Its subcellular location is the cell inner membrane. In terms of biological role, an essential GTPase that binds both GDP and GTP, with rapid nucleotide exchange. Plays a role in 16S rRNA processing and 30S ribosomal subunit biogenesis and possibly also in cell cycle regulation and energy metabolism. The polypeptide is GTPase Era (Elusimicrobium minutum (strain Pei191)).